The sequence spans 302 residues: Succinate--CoA ligase [ADP-forming] subunit alpha (302 aa).

CoA is bound by residues 17–20 (TGST), lysine 43, and 96–98 (ITE). Tyrosine 159 lines the substrate pocket. Histidine 247 (tele-phosphohistidine intermediate) is an active-site residue.

It belongs to the succinate/malate CoA ligase alpha subunit family. In terms of assembly, heterotetramer of two alpha and two beta subunits.

The catalysed reaction is succinate + ATP + CoA = succinyl-CoA + ADP + phosphate. The enzyme catalyses GTP + succinate + CoA = succinyl-CoA + GDP + phosphate. It functions in the pathway carbohydrate metabolism; tricarboxylic acid cycle; succinate from succinyl-CoA (ligase route): step 1/1. Succinyl-CoA synthetase functions in the citric acid cycle (TCA), coupling the hydrolysis of succinyl-CoA to the synthesis of either ATP or GTP and thus represents the only step of substrate-level phosphorylation in the TCA. The alpha subunit of the enzyme binds the substrates coenzyme A and phosphate, while succinate binding and nucleotide specificity is provided by the beta subunit. The chain is Succinate--CoA ligase [ADP-forming] subunit alpha from Staphylococcus aureus (strain COL).